The chain runs to 423 residues: Endochitinase 42 (423 aa).

Positions 1 to 22 (MLSFLGKSVALLAALQATLSSP) are cleaved as a signal peptide. A propeptide spanning residues 23-34 (KPGHRRASVEKR) is cleaved from the precursor. Residues 38-401 (YANSVYFTNW…GTSHRALGGL (364 aa)) form the GH18 domain. Residues 102–103 (GT) and 129–132 (GGWT) each bind chitin. Residue E171 is the Proton donor of the active site. Chitin is bound at residue Y172. N-linked (GlcNAc...) asparagine glycosylation occurs at N218. Chitin contacts are provided by residues 237–240 (MAYD) and W378.

It belongs to the glycosyl hydrolase 18 family. Chitinase class V subfamily.

The protein localises to the secreted. The catalysed reaction is Random endo-hydrolysis of N-acetyl-beta-D-glucosaminide (1-&gt;4)-beta-linkages in chitin and chitodextrins.. Functionally, secreted chitinase involved in the degradation of chitin, a component of the cell walls of fungi and exoskeletal elements of some animals (including worms and arthropods). Plays a morphogenetic role during apical growth, cell division and differentiation (cell wall morphogenesis). Also acts as an antifungal agent. Involved in the degradation and further assimilation of phytopathogenic fungi, namely mycoparasitism, the major mechanism accounting for the antagonistic activity against phytopathogenic fungi displayed by Trichoderma. The sequence is that of Endochitinase 42 (chit42) from Trichoderma harzianum (Hypocrea lixii).